Consider the following 463-residue polypeptide: RuvB-like 2 (463 aa).

Position 2 is an N-acetylalanine (alanine 2). Lysine 9 is covalently cross-linked (Glycyl lysine isopeptide (Lys-Gly) (interchain with G-Cter in SUMO2)). 77-84 (GQPGTGKT) is a binding site for ATP. Serine 437 carries the phosphoserine modification. Residues lysine 444 and lysine 456 each participate in a glycyl lysine isopeptide (Lys-Gly) (interchain with G-Cter in SUMO2) cross-link.

Belongs to the RuvB family. In terms of assembly, forms homohexameric rings. Can form a dodecamer with RUVBL1 made of two stacked hexameric rings; however, even though RUVBL1 and RUVBL2 are present in equimolar ratio, the oligomeric status of each hexamer is not known. Oligomerization may regulate binding to nucleic acids and conversely, binding to nucleic acids may affect the dodecameric assembly. Interaction of the complex with DHX34 results in conformational changes of the N-terminus of the RUVBL2 subunits, resulting in loss of nucleotide binding ability and ATP hydrolysis of the complex. Interacts with the transcriptional activation domain of MYC. Interacts with ATF2. Component of the RNA polymerase II holoenzyme complex. May also act to bridge the LEF1/TCF1-CTNNB1 complex and TBP. Component of the NuA4 histone acetyltransferase complex which contains the catalytic subunit KAT5/TIP60 and the subunits EP400, TRRAP/PAF400, BRD8/SMAP, EPC1, DMAP1/DNMAP1, RUVBL1/TIP49, RUVBL2, ING3, actin, ACTL6A/BAF53A, MORF4L1/MRG15, MORF4L2/MRGX, MRGBP, YEATS4/GAS41, VPS72/YL1 and MEAF6. The NuA4 complex interacts with MYC and the adenovirus E1A protein. RUVBL2 interacts with EP400. Component of a NuA4-related complex which contains EP400, TRRAP/PAF400, SRCAP, BRD8/SMAP, EPC1, DMAP1/DNMAP1, RUVBL1/TIP49, RUVBL2, actin, ACTL6A/BAF53A, VPS72 and YEATS4/GAS41. Interacts with NPAT. Component of the chromatin-remodeling INO80 complex; specifically part of a complex module associated with the helicase ATP-binding and the helicase C-terminal domain of INO80. Component of some MLL1/MLL complex, at least composed of the core components KMT2A/MLL1, ASH2L, HCFC1/HCF1, WDR5 and RBBP5, as well as the facultative components BACC1, CHD8, E2F6, HSP70, INO80C, KANSL1, LAS1L, MAX, MCRS1, MGA, MYST1/MOF, PELP1, PHF20, PRP31, RING2, RUVB1/TIP49A, RUVB2/TIP49B, SENP3, TAF1, TAF4, TAF6, TAF7, TAF9 and TEX10. Interacts with IGHMBP2. Interacts with TELO2. Interacts with HINT1. Component of a SWR1-like complex. Component of the R2TP complex composed at least of RUVBL1, RUVBL2, RPAP3 and PIHD1. Component of the PAQosome complex which is responsible for the biogenesis of several protein complexes and which consists of R2TP complex members RUVBL1, RUVBL2, RPAP3 and PIH1D1, URI complex members PFDN2, PFDN6, PDRG1, UXT and URI1 as well as ASDURF, POLR2E and DNAAF10/WDR92. Interacts with ITFG1. Interacts with ZMYND10. Interacts with WAC; WAC positively regulates MTOR activity by promoting the assembly of the TTT complex composed of TELO2, TTI1 and TTI2 and the RUVBL complex composed of RUVBL1 and RUVBL2 into the TTT-RUVBL complex which leads to the dimerization of the mTORC1 complex and its subsequent activation. Forms a complex with APPL1 and APPL2. Interacts with ZNHIT2 (via HIT-type zinc finger) in the presence of ATP or ADP; shows a stronger interaction in the presence of ADP. The RUVBL1/RUVBL2 complex interacts with ZNHIT1 (via HIT-type zinc finger), ZNHIT3 (via HIT-type zinc finger), ZNHIT6 (via HIT-type zinc finger) and DDX59/ZNHIT5 (via HIT-type zinc finger) in the presence of ADP. Interacts with NOPCHAP1; the interaction is direct and disrupted upon ATP binding. Interacts with SMG1. (Microbial infection) Interacts with Mumps L polymerase; this interaction regulates the viral transcription. Ubiquitously expressed. Highly expressed in testis and thymus.

The protein localises to the nucleus matrix. It is found in the nucleus. It localises to the nucleoplasm. Its subcellular location is the cytoplasm. The protein resides in the membrane. The protein localises to the dynein axonemal particle. The catalysed reaction is ATP + H2O = ADP + phosphate + H(+). In terms of biological role, possesses single-stranded DNA-stimulated ATPase and ATP-dependent DNA helicase (5' to 3') activity; hexamerization is thought to be critical for ATP hydrolysis and adjacent subunits in the ring-like structure contribute to the ATPase activity. Component of the NuA4 histone acetyltransferase complex which is involved in transcriptional activation of select genes principally by acetylation of nucleosomal histones H4 and H2A. This modification may both alter nucleosome -DNA interactions and promote interaction of the modified histones with other proteins which positively regulate transcription. This complex may be required for the activation of transcriptional programs associated with oncogene and proto-oncogene mediated growth induction, tumor suppressor mediated growth arrest and replicative senescence, apoptosis, and DNA repair. The NuA4 complex ATPase and helicase activities seem to be, at least in part, contributed by the association of RUVBL1 and RUVBL2 with EP400. NuA4 may also play a direct role in DNA repair when recruited to sites of DNA damage. Component of a SWR1-like complex that specifically mediates the removal of histone H2A.Z/H2AZ1 from the nucleosome. Proposed core component of the chromatin remodeling INO80 complex which exhibits DNA- and nucleosome-activated ATPase activity and catalyzes ATP-dependent nucleosome sliding. Plays an essential role in oncogenic transformation by MYC and also modulates transcriptional activation by the LEF1/TCF1-CTNNB1 complex. May also inhibit the transcriptional activity of ATF2. Involved in the endoplasmic reticulum (ER)-associated degradation (ERAD) pathway where it negatively regulates expression of ER stress response genes. May play a role in regulating the composition of the U5 snRNP complex. This chain is RuvB-like 2 (RUVBL2), found in Homo sapiens (Human).